Consider the following 599-residue polypeptide: Elongation factor 4 (599 aa).

In terms of domain architecture, tr-type G spans 2–184 (KHIRNFSIIA…RLVRDIPAPE (183 aa)). Residues 14-19 (DHGKST) and 131-134 (NKID) contribute to the GTP site.

The protein belongs to the TRAFAC class translation factor GTPase superfamily. Classic translation factor GTPase family. LepA subfamily.

It is found in the cell inner membrane. It carries out the reaction GTP + H2O = GDP + phosphate + H(+). Required for accurate and efficient protein synthesis under certain stress conditions. May act as a fidelity factor of the translation reaction, by catalyzing a one-codon backward translocation of tRNAs on improperly translocated ribosomes. Back-translocation proceeds from a post-translocation (POST) complex to a pre-translocation (PRE) complex, thus giving elongation factor G a second chance to translocate the tRNAs correctly. Binds to ribosomes in a GTP-dependent manner. This Yersinia pestis bv. Antiqua (strain Antiqua) protein is Elongation factor 4.